Here is a 443-residue protein sequence, read N- to C-terminus: Glutamyl-tRNA reductase (443 aa).

Residues 49–52, S109, 114–116, and Q120 contribute to the substrate site; these read TCNR and ETQ. C50 functions as the Nucleophile in the catalytic mechanism. An NADP(+)-binding site is contributed by 189–194; it reads GAGDMS.

This sequence belongs to the glutamyl-tRNA reductase family. In terms of assembly, homodimer.

The enzyme catalyses (S)-4-amino-5-oxopentanoate + tRNA(Glu) + NADP(+) = L-glutamyl-tRNA(Glu) + NADPH + H(+). It participates in porphyrin-containing compound metabolism; protoporphyrin-IX biosynthesis; 5-aminolevulinate from L-glutamyl-tRNA(Glu): step 1/2. Functionally, catalyzes the NADPH-dependent reduction of glutamyl-tRNA(Glu) to glutamate 1-semialdehyde (GSA). This chain is Glutamyl-tRNA reductase, found in Staphylococcus saprophyticus subsp. saprophyticus (strain ATCC 15305 / DSM 20229 / NCIMB 8711 / NCTC 7292 / S-41).